A 619-amino-acid polypeptide reads, in one-letter code: MGEPGGAEAAVSARLLELAADDNAAGLGELLAAWPSLADEPAPWYTPARGAEPLTPLMVAAVYGSVGCLDALLSPPYLVDPNRASASSLSTPLHLAAAGGSASAPAAVSRLLAAGADPALLDHLQRRASDLVALPPNSLPLKNHLLSLLGARKEWPPDPSLPDIKNGAYASDDFRMYSFKVRACSRAYSHDWTECPFVHPGENARRRDPRKYHYSCVPCPEFKKGAGCRRGDMCEYAHGVFESWLHPAQYRTRLCKDGVGCARRVCFFAHTPDELRPLYVSTGSAVPSPRGALEMAAAAAAMGMGLSSPGSSSFTPPLSPSAGGGGGGGGGSGGGGAWPQQPSVPALCLPGSAGNLHLSRLRTSLSARDMAVDELLAAAAAAADYDGLVASPASIRSARGKALVPSNLDELFSAELAAAAASRSPRYADQGGAAFSPTRKATVLNQFQLQQQHSLLSPRAAAVTPEPVSPMSSRLLAALAQREKMQQQTLRSMSSRDLGNAASLLVGSPVSSSMSKWGFPSGNPDWGADDEELGRLKRCSSFELRSGAANGNHEPDLSWVNTLVKEPTPEKMMTTTSAMDSIGILGQNTSRDHIVGGEDDTAGVISSWLEQLQLDEMVV.

ANK repeat units lie at residues 52–81 (EPLT…LVDP) and 88–120 (SLST…DPAL). 2 consecutive C3H1-type zinc fingers follow at residues 213–241 (HYSC…HGVF) and 249–273 (QYRT…HTPD). Positions 308 to 341 (SPGSSSFTPPLSPSAGGGGGGGGGSGGGGAWPQQ) are disordered. A compositionally biased stretch (gly residues) spans 322-337 (AGGGGGGGGGSGGGGA).

The protein is Zinc finger CCCH domain-containing protein 67 of Oryza sativa subsp. japonica (Rice).